Here is a 407-residue protein sequence, read N- to C-terminus: Substance-P receptor (407 aa).

The Extracellular portion of the chain corresponds to 1 to 31 (MDNVLPMDSDLFPNISTNTSESNQFVQPTWQ). N-linked (GlcNAc...) asparagine glycans are attached at residues Asn14 and Asn18. The chain crosses the membrane as a helical span at residues 32–54 (IVLWAAAYTVIVVTSVVGNVVVI). At 55-64 (WIILAHKRMR) the chain is on the cytoplasmic side. Residues 65–86 (TVTNYFLVNLAFAEACMAAFNT) traverse the membrane as a helical segment. The Extracellular portion of the chain corresponds to 87–106 (VVNFTYAVHNVWYYGLFYCK). Cys105 and Cys180 are joined by a disulfide. Residues 107–128 (FHNFFPIAALFASIYSMTAVAF) traverse the membrane as a helical segment. At 129–148 (DRYMAIIHPLQPRLSATATK) the chain is on the cytoplasmic side. Residues 149 to 169 (VVIFVIWVLALLLAFPQGYYS) form a helical membrane-spanning segment. Topologically, residues 170-194 (TTETMPSRVVCMIEWPEHPNRTYEK) are extracellular. The helical transmembrane segment at 195–219 (AYHICVTVLIYFLPLLVIGYAYTVV) threads the bilayer. Residues 220–248 (GITLWASEIPGDSSDRYHEQVSAKRKVVK) are Cytoplasmic-facing. A helical transmembrane segment spans residues 249 to 270 (MMIVVVCTFAICWLPFHVFFLL). The Extracellular segment spans residues 271–283 (PYINPDLYLKKFI). Residues 284–308 (QQVYLASMWLAMSSTMYNPIIYCCL) traverse the membrane as a helical segment. The Cytoplasmic portion of the chain corresponds to 309–407 (NDRFRLGFKH…SSSFYSNMLA (99 aa)). The S-palmitoyl cysteine moiety is linked to residue Cys322. Residues 362-407 (VGAHEEEPEEGPKATPSSLDLTSNGSSRSNSKTMTESSSFYSNMLA) form a disordered region. The segment covering 376–407 (TPSSLDLTSNGSSRSNSKTMTESSSFYSNMLA) has biased composition (polar residues).

Belongs to the G-protein coupled receptor 1 family. Interacts with ARRB1.

The protein resides in the cell membrane. Functionally, this is a receptor for the tachykinin neuropeptide substance P. It is probably associated with G proteins that activate a phosphatidylinositol-calcium second messenger system. The rank order of affinity of this receptor to tachykinins is: substance P &gt; substance K &gt; neuromedin-K. The polypeptide is Substance-P receptor (Tacr1) (Rattus norvegicus (Rat)).